The chain runs to 148 residues: UPF0178 protein lpg0089 (148 aa).

It belongs to the UPF0178 family.

This chain is UPF0178 protein lpg0089, found in Legionella pneumophila subsp. pneumophila (strain Philadelphia 1 / ATCC 33152 / DSM 7513).